The chain runs to 103 residues: Large ribosomal subunit protein bL21 (103 aa).

The protein belongs to the bacterial ribosomal protein bL21 family. As to quaternary structure, part of the 50S ribosomal subunit. Contacts protein L20.

In terms of biological role, this protein binds to 23S rRNA in the presence of protein L20. The chain is Large ribosomal subunit protein bL21 from Psychrobacter sp. (strain PRwf-1).